Reading from the N-terminus, the 127-residue chain is Large ribosomal subunit protein bL19 (127 aa).

Belongs to the bacterial ribosomal protein bL19 family.

This protein is located at the 30S-50S ribosomal subunit interface and may play a role in the structure and function of the aminoacyl-tRNA binding site. The sequence is that of Large ribosomal subunit protein bL19 from Jannaschia sp. (strain CCS1).